The primary structure comprises 161 residues: UPF0178 protein BSUIS_A1819 (161 aa).

The protein belongs to the UPF0178 family.

The sequence is that of UPF0178 protein BSUIS_A1819 from Brucella suis (strain ATCC 23445 / NCTC 10510).